A 240-amino-acid chain; its full sequence is LOB domain-containing protein 39 (240 aa).

An LOB domain is found at 1 to 107 (MSCNGCRVLR…VETVLRGGTL (107 aa)). The segment at 200-233 (GDRPGSPSEESVTTSCWENGMRGDNKQKRNKGEK) is disordered. Residues 207-216 (SEESVTTSCW) are compositionally biased toward polar residues.

The protein belongs to the LOB domain-containing protein family. In terms of tissue distribution, expressed in young shoots, roots, stems, leaves and flowers.

This chain is LOB domain-containing protein 39 (LBD39), found in Arabidopsis thaliana (Mouse-ear cress).